The following is a 73-amino-acid chain: Putative membrane protein insertion efficiency factor (73 aa).

Belongs to the UPF0161 family.

It is found in the cell inner membrane. Functionally, could be involved in insertion of integral membrane proteins into the membrane. The protein is Putative membrane protein insertion efficiency factor of Dinoroseobacter shibae (strain DSM 16493 / NCIMB 14021 / DFL 12).